Reading from the N-terminus, the 445-residue chain is Probable D-serine dehydratase (445 aa).

The residue at position 119 (Lys119) is an N6-(pyridoxal phosphate)lysine.

The protein belongs to the serine/threonine dehydratase family. DsdA subfamily. The cofactor is pyridoxal 5'-phosphate.

It catalyses the reaction D-serine = pyruvate + NH4(+). The polypeptide is Probable D-serine dehydratase (Pseudomonas putida (strain GB-1)).